Consider the following 208-residue polypeptide: Small ribosomal subunit protein uS4 (208 aa).

An S4 RNA-binding domain is found at 98–161 (QRLDNLVYRM…KNNPQILRAV (64 aa)).

It belongs to the universal ribosomal protein uS4 family. As to quaternary structure, part of the 30S ribosomal subunit. Contacts protein S5. The interaction surface between S4 and S5 is involved in control of translational fidelity.

One of the primary rRNA binding proteins, it binds directly to 16S rRNA where it nucleates assembly of the body of the 30S subunit. Functionally, with S5 and S12 plays an important role in translational accuracy. The protein is Small ribosomal subunit protein uS4 of Campylobacter hominis (strain ATCC BAA-381 / DSM 21671 / CCUG 45161 / LMG 19568 / NCTC 13146 / CH001A).